Reading from the N-terminus, the 580-residue chain is tRNA-guanine(15) transglycosylase (580 aa).

The active-site Nucleophile is aspartate 91. Substrate contacts are provided by aspartate 126 and alanine 192. Residues cysteine 275, cysteine 277, and cysteine 280 each coordinate Zn(2+). The PUA domain occupies 504-579; that stretch reads RMRVVVDEDA…LAVKVRRGVE (76 aa).

Belongs to the archaeosine tRNA-ribosyltransferase family. It depends on Zn(2+) as a cofactor.

It carries out the reaction guanosine(15) in tRNA + 7-cyano-7-deazaguanine = 7-cyano-7-carbaguanosine(15) in tRNA + guanine. Its pathway is tRNA modification; archaeosine-tRNA biosynthesis. In terms of biological role, exchanges the guanine residue with 7-cyano-7-deazaguanine (preQ0) at position 15 in the dihydrouridine loop (D-loop) of archaeal tRNAs. The protein is tRNA-guanine(15) transglycosylase of Thermococcus kodakarensis (strain ATCC BAA-918 / JCM 12380 / KOD1) (Pyrococcus kodakaraensis (strain KOD1)).